A 649-amino-acid polypeptide reads, in one-letter code: Forkhead box protein O1 (649 aa).

2 disordered regions span residues 1-62 (MAEA…ASAS) and 112-151 (VHSAPPQPPPTGPLSQPPPVPPAAAGPLAGQPRKTSSSRR). A Phosphothreonine; by PKB/AKT1 or PKB/AKT2 and SGK1 modification is found at Thr-24. The span at 33-62 (NQSNSTTSSPAPSGSTAANPDATASLASAS) shows a compositional bias: low complexity. The span at 116–135 (PPQPPPTGPLSQPPPVPPAA) shows a compositional bias: pro residues. Positions 154–248 (WGNLSYADLI…KSGKSPRRRA (95 aa)) form a DNA-binding region, fork-head. 2 DNA-binding regions span residues 205-212 (NSIRHNLS) and 228-231 (SSWW). Position 206 is a phosphoserine; by STK4/MST1 (Ser-206). Phosphoserine occurs at positions 212, 228, and 229. The disordered stretch occupies residues 228-339 (SSWWMLNPEG…DDLGDGDVHS (112 aa)). Residues Lys-239 and Lys-242 each carry the N6-acetyllysine modification. Ser-243 carries the phosphoserine; by CDK1 modification. 2 positions are modified to omega-N-methylarginine; by PRMT1: Arg-245 and Arg-247. A Nuclear localization signal motif is present at residues 245–247 (RRR). Ser-250 carries the post-translational modification Phosphoserine; by PKB/AKT1 and SGK1. 3 positions are modified to N6-acetyllysine: Lys-256, Lys-259, and Lys-268. Over residues 258–269 (AKSRGRAAKKKA) the composition is skewed to basic residues. Positions 277–557 (GPGDSPGSQF…RLTPVKTPLQ (281 aa)) are sufficient for interaction with NLK. Phosphoserine is present on residues Ser-281 and Ser-292. The span at 303 to 320 (NWSTFRPRTSSNASTISG) shows a compositional bias: polar residues. Ser-313 is modified (phosphoserine; by PKB/AKT1). A Phosphoserine; by CK1 and SGK1 modification is found at Ser-316. Phosphoserine; by CK1 is present on Ser-319. Phosphoserine is present on Ser-323. Thr-327 carries the post-translational modification Phosphothreonine. The required for interaction with RUNX2 stretch occupies residues 357 to 453 (SEISNPENME…GGLNQYNCAP (97 aa)). Residue Lys-417 is modified to N6-acetyllysine. The Required for interaction with SIRT1 motif lies at 456–460 (LKELL).

As to quaternary structure, interacts with LRPPRC. Interacts with RUNX2; the interaction inhibits RUNX2 transcriptional activity and mediates the IGF1/insulin-dependent BGLAP expression in osteoblasts Interacts with PPP2R1A; the interaction regulates the dephosphorylation of FOXO1 at Thr-24 and Ser-250 leading to its nuclear import. Interacts with NLK. Interacts with SIRT1; the interaction results in the deacetylation of FOXO1 leading to activation of FOXO1-mediated transcription of genes involved in DNA repair and stress resistance. Binds to CDK1. Interacts with the 14-3-3 proteins, YWHAG and YWHAZ; the interactions require insulin-stimulated phosphorylation on Thr-24, promote nuclear exit and loss of transcriptional activity. Interacts with SKP2; the interaction ubiquitinates FOXO1 leading to its proteasomal degradation. The interaction requires the presence of KRIT1. Interacts (via the C-terminal half) with ATF4 (via its DNA binding domain); the interaction occurs in osteoblasts, regulates glucose homeostasis via suppression of beta-cell proliferation and subsequent decrease in insulin production. Interacts with PRMT1; the interaction methylates FOXO1, prevents PKB/AKT1 phosphorylation and retains FOXO1 in the nucleus. Interacts with EP300 and CREBBP; the interactions acetylate FOXO1. Interacts with SIRT2; the interaction is disrupted in response to oxidative stress or serum deprivation, leading to increased level of acetylated FOXO1, which promotes stress-induced autophagy by stimulating E1-like activating enzyme ATG7. Interacts (acetylated form) with ATG7; the interaction is increased in response to oxidative stress or serum deprivation and promotes the autophagic process leading to cell death. Interacts (acetylated form) with PPARG. Interacts with XBP1; this interaction is direct and leads to FOXO1 ubiquitination and degradation via the proteasome pathway. Interacts (via the Fork-head domain) with CEBPA; the interaction increases when FOXO1 is deacetylated. Interacts with WDFY2. Forms a complex with WDFY2 and AKT1. Interacts with CRY1. Interacts with PPIA/CYPA; the interaction promotes FOXO1 dephosphorylation, nuclear accumulation and transcriptional activity. Interacts with TOX4; FOXO1 is required for full induction of TOX4-dependent activity and the interaction is inhibited by insulin. Interacts (when phosphorylated on Ser-250) with STUB1/CHIP. In terms of processing, phosphorylation by NLK promotes nuclear export and inhibits the transcriptional activity. In response to growth factors, phosphorylation on Thr-24, Ser-250 and Ser-313 by PKB/AKT1 promotes nuclear export and inactivation of transactivational activity. Phosphorylation on Thr-24 is required for binding 14-3-3 proteins. Phosphorylation of Ser-250 decreases DNA-binding activity and promotes the phosphorylation of Thr-24 and Ser-313, permitting phosphorylation of Ser-316 and Ser-319, probably by CDK1, leading to nuclear exclusion and loss of function. Stress signals, such as response to oxygen or nitric oxide, attenuate the PKB/AKT1-mediated phosphorylation leading to nuclear retention. Phosphorylation of Ser-323 is independent of IGF1 and leads to reduced function. Dephosphorylated on Thr-24 and Ser-250 by PP2A in beta-cells under oxidative stress leading to nuclear retention. Phosphorylation of Ser-243 by CDK1 disrupts binding of 14-3-3 proteins leading to nuclear accumulation and has no effect on DNA binding nor transcriptional activity. Phosphorylation by STK4/MST1 on Ser-206, upon oxidative stress, inhibits binding to 14-3-3 proteins and nuclear export. PPIA/CYPA promotes its dephosphorylation on Ser-250. Post-translationally, ubiquitinated by SKP2. Ubiquitination leads to proteasomal degradation. Ubiquitinated by STUB1/CHIP; when Ser-250 is phosphorylated. Methylation inhibits AKT1-mediated phosphorylation at Ser-250 and is increased by oxidative stress. In terms of processing, acetylated. Acetylation at Lys-256 and Lys-268 are necessary for autophagic cell death induction. Deacetylated by SIRT2 in response to oxidative stress or serum deprivation, thereby negatively regulating FOXO1-mediated autophagic cell death. Once in the nucleus, acetylated by CREBBP/EP300. Acetylation diminishes the interaction with target DNA and attenuates the transcriptional activity. It increases the phosphorylation at Ser-250. Deacetylation by SIRT1 results in reactivation of the transcriptional activity. Oxidative stress by hydrogen peroxide treatment appears to promote deacetylation and uncoupling of insulin-induced phosphorylation. By contrast, resveratrol acts independently of acetylation. Acetylated at Lys-417, promoting its localization to the nucleus and transcription factor activity. Deacetylation at Lys-417 by SIRT6, promotes its translocation into the cytoplasm, preventing its transcription factor activity. Deacetylation and subsequent inhibition by SIRT6 has different effects depending on cell types: it inhibits gluconeogenesis in hepatocytes, promotes glucose sensing in pancreatic beta-cells and regulates lipid catabolism in brown adipocytes. As to expression, expressed in the internal elastic lamina of the carotid artery (at protein level).

Its subcellular location is the cytoplasm. The protein resides in the nucleus. Transcription factor that is the main target of insulin signaling and regulates metabolic homeostasis in response to oxidative stress. Binds to the insulin response element (IRE) with consensus sequence 5'-TT[G/A]TTTTG-3' and the related Daf-16 family binding element (DBE) with consensus sequence 5'-TT[G/A]TTTAC-3'. Activity suppressed by insulin. Main regulator of redox balance and osteoblast numbers and controls bone mass. Orchestrates the endocrine function of the skeleton in regulating glucose metabolism. Also acts as a key regulator of chondrogenic commitment of skeletal progenitor cells in response to lipid availability: when lipids levels are low, translocates to the nucleus and promotes expression of SOX9, which induces chondrogenic commitment and suppresses fatty acid oxidation. Acts synergistically with ATF4 to suppress osteocalcin/BGLAP activity, increasing glucose levels and triggering glucose intolerance and insulin insensitivity. Also suppresses the transcriptional activity of RUNX2, an upstream activator of osteocalcin/BGLAP. Acts as an inhibitor of glucose sensing in pancreatic beta cells by acting as a transcription repressor and suppressing expression of PDX1. In hepatocytes, promotes gluconeogenesis by acting together with PPARGC1A and CEBPA to activate the expression of genes such as IGFBP1, G6PC1 and PCK1. Also promotes gluconeogenesis by directly promoting expression of PPARGC1A and G6PC1. Important regulator of cell death acting downstream of CDK1, PKB/AKT1 and STK4/MST1. Promotes neural cell death. Mediates insulin action on adipose tissue. Regulates the expression of adipogenic genes such as PPARG during preadipocyte differentiation and, adipocyte size and adipose tissue-specific gene expression in response to excessive calorie intake. Regulates the transcriptional activity of GADD45A and repair of nitric oxide-damaged DNA in beta-cells. Required for the autophagic cell death induction in response to starvation or oxidative stress in a transcription-independent manner. Mediates the function of MLIP in cardiomyocytes hypertrophy and cardiac remodeling. Positive regulator of apoptosis in cardiac smooth muscle cells as a result of its transcriptional activation of pro-apoptotic genes. Regulates endothelial cell (EC) viability and apoptosis in a PPIA/CYPA-dependent manner via transcription of CCL2 and BCL2L11 which are involved in EC chemotaxis and apoptosis. The chain is Forkhead box protein O1 (Foxo1) from Rattus norvegicus (Rat).